We begin with the raw amino-acid sequence, 223 residues long: Neurotrophic factor BDNF precursor form (223 aa).

Positions 1–5 (SCMKA) are cleaved as a signal peptide. The propeptide occupies 6–114 (APMKEVSIRG…AANMSMRVRR (109 aa)). Residue N107 is glycosylated (N-linked (GlcNAc...) asparagine). 2 disulfide bridges follow: C127–C194 and C172–C223.

The protein belongs to the NGF-beta family.

The protein resides in the secreted. Functionally, promotes the survival of neuronal populations that are all located either in the central nervous system or directly connected to it. The protein is Neurotrophic factor BDNF precursor form (BDNF) of Calabaria reinhardtii (Calabar boa).